A 105-amino-acid chain; its full sequence is Platelet factor 4 (105 aa).

Positions 1 to 29 (MSVAAVFRGLRPSPELLLLGLLFLPAVVA) are cleaved as a signal peptide. T31 carries an O-linked (GalNAc...) threonine glycan. 2 disulfides stabilise this stretch: C44–C71 and C46–C87. S61 carries the phosphoserine modification. Residue 96 to 102 (KKVIKKI) participates in heparin binding.

The protein belongs to the intercrine alpha (chemokine CxC) family. As to quaternary structure, homotetramer. Interacts with TNFAIP6 (via Link domain). Interacts with CCR1. Interacts with CXCR3. Interacts with THBD; this interaction enhances generation of activated protein C.

Its subcellular location is the secreted. Functionally, chemokine released during platelet aggregation that plays a role in different biological processes including hematopoiesis, cell proliferation, differentiation, and activation. Acts via different functional receptors including CCR1, CXCR3A or CXCR3B. Upon interaction with CXCR3A receptor, induces activated T-lymphocytes migration mediated via downstream Ras/extracellular signal-regulated kinase (ERK) signaling. Neutralizes the anticoagulant effect of heparin by binding more strongly to heparin than to the chondroitin-4-sulfate chains of the carrier molecule. Plays a role in the inhibition of hematopoiesis and in the maintenance of hematopoietic stem cell (HSC) quiescence. Chemotactic for neutrophils and monocytes via CCR1. Inhibits endothelial cell proliferation. In cooperation with toll-like receptor 8/TLR8, induces chromatin remodeling and activates inflammatory gene expression via the TBK1-IRF5 axis. In addition, induces myofibroblast differentiation and collagen synthesis in different precursor cells, including endothelial cells, by stimulating endothelial-to-mesenchymal transition. Interacts with thrombomodulin/THBD to enhance the activation of protein C and thus potentiates its anticoagulant activity. The polypeptide is Platelet factor 4 (Pf4) (Mus musculus (Mouse)).